A 242-amino-acid chain; its full sequence is Uridylate kinase (242 aa).

Position 15–18 (15–18 (KLSG)) interacts with ATP. Residue Gly-57 participates in UMP binding. Positions 58 and 62 each coordinate ATP. UMP-binding positions include Asp-78 and 139–146 (TGNPFFTT). 3 residues coordinate ATP: Thr-166, Tyr-172, and Asp-175.

The protein belongs to the UMP kinase family. In terms of assembly, homohexamer.

It is found in the cytoplasm. It carries out the reaction UMP + ATP = UDP + ADP. It participates in pyrimidine metabolism; CTP biosynthesis via de novo pathway; UDP from UMP (UMPK route): step 1/1. With respect to regulation, inhibited by UTP. Functionally, catalyzes the reversible phosphorylation of UMP to UDP. In Acinetobacter baylyi (strain ATCC 33305 / BD413 / ADP1), this protein is Uridylate kinase.